The chain runs to 1475 residues: Peroxidasin homolog (1475 aa).

The first 23 residues, M1 to A23, serve as a signal peptide directing secretion. Positions V24–Q60 constitute an LRRNT domain. 2 cysteine pairs are disulfide-bonded: C33–C39 and C37–C46. LRR repeat units lie at residues A58–R81, L82–D105, E107–G129, L130–H153, L154–Q177, and E179–A201. Positions N189–E241 constitute an LRRCT domain. Disulfide bonds link C193–C240, C195–C219, C264–C314, C360–C409, C451–C499, and C543–C591. 4 Ig-like C2-type domains span residues P243 to T329, P339 to I425, P430 to Q517, and P518 to S607. N-linked (GlcNAc...) asparagine glycosylation is present at N387. The LRR 7 repeat unit spans residues S402–I425. N-linked (GlcNAc...) asparagine glycosylation is found at N637, N696, N716, and N728. Disulfide bonds link C720–C882, C729–C745, C844–C854, and C848–C872. D823 is a heme b binding site. Residue H824 is the Proton acceptor of the active site. D825 lines the Ca(2+) pocket. Ca(2+) contacts are provided by T904, Y906, D908, and S910. C956 and C967 form a disulfide bridge. An N-linked (GlcNAc...) asparagine glycan is attached at N961. Heme b contacts are provided by E977 and H1071. An LRR 8 repeat occupies A1148 to V1172. At Y1173 the chain carries Phosphotyrosine. 2 cysteine pairs are disulfide-bonded: C1174–C1231 and C1272–C1298. N1175 carries N-linked (GlcNAc...) asparagine glycosylation. S1177 carries the phosphoserine modification. Residues L1267–V1288 form an LRR 9 repeat. Residues N1277 and N1364 are each glycosylated (N-linked (GlcNAc...) asparagine). Residues C1312–S1407 are required in homotrimerization. The VWFC domain maps to T1409–L1467.

This sequence belongs to the peroxidase family. XPO subfamily. In terms of assembly, homotrimer; disulfide-linked. The homotrimer form is predominant. Homooligomer; disulfide-linked. Oligomerization occurs intracellularly before C-terminal proteolytic cleavage. Interacts with PXDNL; this interaction inhibits the peroxidase activity of PXDN. Ca(2+) is required as a cofactor. Heme b serves as cofactor. Post-translationally, processed by FURIN and the proteolytic processing largely depends on the peroxidase activity of PXDN. The proteolytic cleavage occurs after intracellular homotrimerization and releases into the extracellular matrix a large, catalytically active fragment and a smaller fragment consisting primarily of the C-terminal VWFC domain. The processing enhances both peroxidase activity and sulfilimine cross-links formation. In terms of tissue distribution, highly expressed in the cardiovascular system. In the embryo, expressed in the corneal epithelial layer. In the adult eyes, expressed in the corneal and lens epithelium. Expressed in lung.

It localises to the secreted. It is found in the extracellular space. The protein resides in the extracellular matrix. The protein localises to the endoplasmic reticulum. Its subcellular location is the cell surface. It localises to the basement membrane. It carries out the reaction L-lysyl-[collagen] + L-methionyl-[collagen] + H2O2 = [collagen]-L-lysyl-N-S-L-methionyl-[collagen] + 2 H2O + H(+). The catalysed reaction is bromide + H2O2 = hypobromite + H2O. It catalyses the reaction L-lysyl-[collagen] + L-methionyl-[collagen] + hypobromite = [collagen]-L-lysyl-N-S-L-methionyl-[collagen] + bromide + H2O + H(+). The enzyme catalyses (5R)-5-hydroxy-L-lysyl-[collagen] + L-methionyl-[collagen] + hypobromite = [collagen]-(5R)-5-hydroxy-L-lysyl-N-S-L-methionyl-[collagen] + bromide + H2O + H(+). It carries out the reaction (5R)-5-hydroxy-L-lysyl-[collagen] + L-methionyl-[collagen] + H2O2 = [collagen]-(5R)-5-hydroxy-L-lysyl-N-S-L-methionyl-[collagen] + 2 H2O + H(+). The catalysed reaction is L-tyrosyl-[protein] + bromide + H2O2 + H(+) = 3-bromo-L-tyrosyl-[protein] + 2 H2O. It catalyses the reaction hypobromite + L-tyrosyl-[protein] + H(+) = 3-bromo-L-tyrosyl-[protein] + H2O. Its activity is regulated as follows. Thiocyanate inhibits the formation of 3-bromotyrosine. In terms of biological role, catalyzes the two-electron oxidation of bromide by hydrogen peroxide and generates hypobromite as a reactive intermediate which mediates the formation of sulfilimine cross-links between methionine and hydroxylysine residues within an uncross-linked collagen IV/COL4A1 NC1 hexamer. In turns, directly contributes to the collagen IV network-dependent fibronectin/FN and laminin assembly, which is required for full extracellular matrix (ECM)-mediated signaling. Thus, sulfilimine cross-links are essential for growth factor-induced cell proliferation and survival in endothelial cells, an event essential to basement membrane integrity. In addition, through the bromide oxidation, may promote tubulogenesis and induce angiogenesis through ERK1/2, Akt, and FAK pathways. Moreover brominates alpha2 collagen IV chain/COL4A2 at 'Tyr-1480' and leads to bromine enrichment of the basement membranes. In vitro, can also catalyze the two-electron oxidation of thiocyanate and iodide and these two substrates could effectively compete with bromide and thus inhibit the formation of sulfilimine bonds. Binds laminins. May play a role in the organization of eyeball structure and lens development during eye development. The polypeptide is Peroxidasin homolog (Mus musculus (Mouse)).